Consider the following 4047-residue polypeptide: Cubilin homolog (4047 aa).

The first 22 residues, 1–22, serve as a signal peptide directing secretion; sequence MIPNLQLFLSLILFGLLNHVSS. N-linked (GlcNAc...) asparagine glycosylation is found at asparagine 56, asparagine 92, and asparagine 127. In terms of domain architecture, EGF-like 1 spans 168–205; it reads AINACDPNKCSNGGTCIPSFGAKFTCLCPPHFTGTTCE. Intrachain disulfides connect cysteine 172-cysteine 183, cysteine 177-cysteine 193, cysteine 195-cysteine 204, cysteine 211-cysteine 227, cysteine 221-cysteine 236, cysteine 238-cysteine 247, cysteine 310-cysteine 321, cysteine 315-cysteine 330, cysteine 333-cysteine 344, cysteine 350-cysteine 363, cysteine 357-cysteine 372, cysteine 375-cysteine 386, cysteine 392-cysteine 403, cysteine 397-cysteine 418, cysteine 420-cysteine 434, cysteine 442-cysteine 453, cysteine 447-cysteine 463, cysteine 465-cysteine 474, cysteine 480-cysteine 491, cysteine 485-cysteine 500, cysteine 502-cysteine 511, cysteine 518-cysteine 544, cysteine 577-cysteine 601, cysteine 645-cysteine 667, cysteine 696-cysteine 719, and cysteine 769-cysteine 801. Residues 207–248 form the EGF-like 2; calcium-binding domain; it reads DIDECSVYNGTTAGCQNNGTCINNRGGFECQCQSGYHGSLCQ. 2 N-linked (GlcNAc...) asparagine glycosylation sites follow: asparagine 215 and asparagine 224. The region spanning 306-345 is the EGF-like 3; calcium-binding domain; it reads DVNECESNPCHPGVDCINLPGSFVCSGCPKGYKTDGNVCI. Residues 346-387 form the EGF-like 4; calcium-binding domain; the sequence is DVNECEGEIRVCSPLSKCHNTLGSYYCDSCPTGYSGDGGNCV. EGF-like domains are found at residues 388 to 435, 438 to 475, and 476 to 512; these read KDDS…EGCV, ASNV…KFCE, and KTSP…RACE. CUB domains follow at residues 518-641, 645-763, 769-934, 934-1061, 1065-1182, 1188-1300, 1304-1427, 1428-1558, 1560-1680, and 1691-1841; these read CGSH…WETV, CGYR…YKFT, CGAE…YEML, LCEK…YKTS, CGGV…FEAV, CDFT…YETI, CGGR…FTTL, CNGI…WNTL, CSRD…VEFV, and CGQV…MIPK. N-linked (GlcNAc...) asparagine glycans are attached at residues asparagine 528, asparagine 537, and asparagine 583. N-linked (GlcNAc...) asparagine glycosylation is found at asparagine 775, asparagine 806, and asparagine 811. The cysteines at positions 877 and 896 are disulfide-linked. Asparagine 942 carries N-linked (GlcNAc...) asparagine glycosylation. Intrachain disulfides connect cysteine 1065–cysteine 1091, cysteine 1120–cysteine 1145, and cysteine 1188–cysteine 1211. N-linked (GlcNAc...) asparagine glycosylation is present at asparagine 1133. Residue asparagine 1229 is glycosylated (N-linked (GlcNAc...) asparagine). The cysteines at positions 1234 and 1262 are disulfide-linked. N-linked (GlcNAc...) asparagine glycosylation is present at asparagine 1294. Cysteine 1304 and cysteine 1330 are joined by a disulfide. Asparagine 1353 is a glycosylation site (N-linked (GlcNAc...) asparagine). 3 disulfide bridges follow: cysteine 1428-cysteine 1455, cysteine 1488-cysteine 1522, and cysteine 1560-cysteine 1586. Asparagine 1513 carries N-linked (GlcNAc...) asparagine glycosylation. Residues asparagine 1613, asparagine 1631, asparagine 1648, and asparagine 1674 are each glycosylated (N-linked (GlcNAc...) asparagine). Cysteine 1614 and cysteine 1641 are joined by a disulfide. Cysteine 1691 and cysteine 1720 are joined by a disulfide. 4 N-linked (GlcNAc...) asparagine glycosylation sites follow: asparagine 1762, asparagine 1782, asparagine 1866, and asparagine 1890. Residues cysteine 1955 and cysteine 1979 are joined by a disulfide bond. A CUB 11 domain is found at 1955–2083; that stretch reads CGGEVRHSQG…PLFKARYEKV (129 aa). 3 N-linked (GlcNAc...) asparagine glycosylation sites follow: asparagine 2005, asparagine 2016, and asparagine 2017. The cysteines at positions 2006 and 2027 are disulfide-linked. The tract at residues 2052-2071 is disordered; sequence ASDGNDDDDDTPDIDQQDSN. The span at 2055 to 2067 shows a compositional bias: acidic residues; the sequence is GNDDDDDTPDIDQ. Asparagine 2193 carries N-linked (GlcNAc...) asparagine glycosylation. Cystine bridges form between cysteine 2207-cysteine 2238 and cysteine 2265-cysteine 2295. 5 consecutive CUB domains span residues 2207–2334, 2335–2463, 2467–2588, 2590–2717, and 2721–2859; these read CGGD…YRLT, CNSF…IKEQ, CPSG…YGIA, CGGT…VTMS, and CGGR…YMAI. 2 N-linked (GlcNAc...) asparagine glycosylation sites follow: asparagine 2301 and asparagine 2305. Disulfide bonds link cysteine 2335/cysteine 2368 and cysteine 2395/cysteine 2424. The N-linked (GlcNAc...) asparagine glycan is linked to asparagine 2434. Disulfide bonds link cysteine 2467/cysteine 2498 and cysteine 2590/cysteine 2619. N-linked (GlcNAc...) asparagine glycosylation is found at asparagine 2599, asparagine 2645, asparagine 2657, and asparagine 2692. Cysteine 2646 and cysteine 2668 form a disulfide bridge. 2 cysteine pairs are disulfide-bonded: cysteine 2721–cysteine 2747 and cysteine 2786–cysteine 2809. N-linked (GlcNAc...) asparagine glycosylation is found at asparagine 2811, asparagine 2845, asparagine 2875, and asparagine 2988. 4 disulfide bridges follow: cysteine 2996/cysteine 3025, cysteine 3052/cysteine 3074, cysteine 3127/cysteine 3154, and cysteine 3181/cysteine 3217. 7 CUB domains span residues 2996–3121, 3127–3254, 3255–3385, 3387–3508, 3515–3641, 3645–3783, and 3786–3900; these read CGGV…YEFL, CGYH…WEAE, CGAI…YSIN, CGDN…VISS, CGGK…YSIV, CGGW…YNIL, and CNRT…YYTV. Asparagine 3235 is a glycosylation site (N-linked (GlcNAc...) asparagine). Intrachain disulfides connect cysteine 3255–cysteine 3281, cysteine 3315–cysteine 3335, and cysteine 3387–cysteine 3418. N-linked (GlcNAc...) asparagine glycosylation is found at asparagine 3421 and asparagine 3461. 2 disulfide bridges follow: cysteine 3445/cysteine 3468 and cysteine 3515/cysteine 3544. An N-linked (GlcNAc...) asparagine glycan is attached at asparagine 3635. Cystine bridges form between cysteine 3645–cysteine 3680 and cysteine 3708–cysteine 3742. 5 N-linked (GlcNAc...) asparagine glycosylation sites follow: asparagine 3770, asparagine 3787, asparagine 3812, asparagine 3858, and asparagine 3930. Cystine bridges form between cysteine 3786/cysteine 3815 and cysteine 3845/cysteine 3863.

It is found in the secreted. Functionally, cotransporter which plays a role in lipoprotein, vitamin and iron metabolism, by facilitating their uptake. The protein is Cubilin homolog of Caenorhabditis elegans.